A 230-amino-acid chain; its full sequence is Magnesium-protoporphyrin O-methyltransferase (230 aa).

The protein belongs to the class I-like SAM-binding methyltransferase superfamily. Magnesium protoporphyrin O-methyltransferase family.

The catalysed reaction is Mg-protoporphyrin IX + S-adenosyl-L-methionine = Mg-protoporphyrin IX 13-monomethyl ester + S-adenosyl-L-homocysteine. It participates in porphyrin-containing compound metabolism; chlorophyll biosynthesis (light-independent). Converts Mg-protoporphyrin IX to Mg-protoporphyrin IX methylester using S-adenosyl-L-methionine as a cofactor. The polypeptide is Magnesium-protoporphyrin O-methyltransferase (chlM) (Synechocystis sp. (strain ATCC 27184 / PCC 6803 / Kazusa)).